The chain runs to 480 residues: UDP-N-acetylmuramate--L-alanine ligase (480 aa).

Position 115–121 (115–121 (GTHGKTT)) interacts with ATP.

Belongs to the MurCDEF family.

The protein resides in the cytoplasm. The enzyme catalyses UDP-N-acetyl-alpha-D-muramate + L-alanine + ATP = UDP-N-acetyl-alpha-D-muramoyl-L-alanine + ADP + phosphate + H(+). The protein operates within cell wall biogenesis; peptidoglycan biosynthesis. Its function is as follows. Cell wall formation. The chain is UDP-N-acetylmuramate--L-alanine ligase from Gluconacetobacter diazotrophicus (strain ATCC 49037 / DSM 5601 / CCUG 37298 / CIP 103539 / LMG 7603 / PAl5).